Consider the following 293-residue polypeptide: Protease HtpX homolog (293 aa).

A run of 2 helical transmembrane segments spans residues 4–24 (IFLFLITNLAVMVVLSATMRI) and 38–58 (LTGLLIFSAVIGFTGAIISLL). His146 serves as a coordination point for Zn(2+). Glu147 is a catalytic residue. Zn(2+) is bound at residue His150. Transmembrane regions (helical) follow at residues 161–181 (LIQGVVNTFVVFLARVVGYFV) and 198–218 (ATVIVCEIVFGILASIIVAWF). Glu223 contacts Zn(2+).

Belongs to the peptidase M48B family. The cofactor is Zn(2+).

Its subcellular location is the cell inner membrane. In Bordetella parapertussis (strain 12822 / ATCC BAA-587 / NCTC 13253), this protein is Protease HtpX homolog.